Consider the following 267-residue polypeptide: Undecaprenyl-diphosphatase (267 aa).

A run of 8 helical transmembrane segments spans residues M1–I21, Q39–F59, S83–F103, L111–V131, A149–I169, F189–M209, L218–L238, and M246–L266.

Belongs to the UppP family.

It is found in the cell inner membrane. The catalysed reaction is di-trans,octa-cis-undecaprenyl diphosphate + H2O = di-trans,octa-cis-undecaprenyl phosphate + phosphate + H(+). Catalyzes the dephosphorylation of undecaprenyl diphosphate (UPP). Confers resistance to bacitracin. This is Undecaprenyl-diphosphatase from Aliivibrio fischeri (strain ATCC 700601 / ES114) (Vibrio fischeri).